Here is a 508-residue protein sequence, read N- to C-terminus: Cytochrome P450 4A12 (508 aa).

2 consecutive transmembrane segments (helical) span residues 10–30 (IFPGSILGFLQIATVLTVLLL) and 120–140 (FLAPWIGYGLLLLNGQTWFQH). E319 provides a ligand contact to heme. S438 carries the phosphoserine modification. Residue C455 coordinates heme.

It belongs to the cytochrome P450 family. Heme serves as cofactor. Expressed at proximal straight tubules and preglomerular arteries of the outer medulla as well in the cortex regions of kidney (at protein level).

The protein resides in the endoplasmic reticulum membrane. It localises to the microsome membrane. It carries out the reaction an organic molecule + reduced [NADPH--hemoprotein reductase] + O2 = an alcohol + oxidized [NADPH--hemoprotein reductase] + H2O + H(+). The catalysed reaction is dodecanoate + reduced [NADPH--hemoprotein reductase] + O2 = 12-hydroxydodecanoate + oxidized [NADPH--hemoprotein reductase] + H2O + H(+). The enzyme catalyses dodecanoate + reduced [NADPH--hemoprotein reductase] + O2 = (11R)-hydroxydodecanoate + oxidized [NADPH--hemoprotein reductase] + H2O + H(+). It catalyses the reaction (5Z,8Z,11Z,14Z)-eicosatetraenoate + reduced [NADPH--hemoprotein reductase] + O2 = 20-hydroxy-(5Z,8Z,11Z,14Z)-eicosatetraenoate + oxidized [NADPH--hemoprotein reductase] + H2O + H(+). It carries out the reaction prostaglandin A1 + reduced [NADPH--hemoprotein reductase] + O2 = 20-hydroxy prostaglandin A1 + oxidized [NADPH--hemoprotein reductase] + H2O + H(+). It functions in the pathway lipid metabolism; fatty acid metabolism. Activated by cytochrome b5 and phosphatidylserine. In terms of biological role, a cytochrome P450 monooxygenase involved in the metabolism of fatty acids. Catalyzes predominantly the oxidation of the terminal carbon (omega-oxidation) of saturated and unsaturated fatty acids. May act as a major omega-hydroxylase for dodecanoic (lauric) acid in kidney. At preglomerular arteries, may participate in omega-hydroxylation of (5Z,8Z,11Z,14Z)-eicosatetraenoic acid (arachidonate) to 20-hydroxyeicosatetraenoic acid (20-HETE), a signaling molecule acting both as vasoconstrictive and natriuretic with overall effect on arterial blood pressure. Can also catalyze the oxidation of the penultimate carbon (omega-1 oxidation) of fatty acids with lower efficiency, displaying a preference for the (R)-stereoisomer. Mechanistically, uses molecular oxygen inserting one oxygen atom into a substrate, and reducing the second into a water molecule, with two electrons provided by NADPH via cytochrome P450 reductase (NADPH--hemoprotein reductase). The sequence is that of Cytochrome P450 4A12 (Cyp4a12) from Rattus norvegicus (Rat).